The chain runs to 224 residues: Dimethyl sulfoxide reductase transcriptional activator (224 aa).

In terms of domain architecture, HTH bat-type spans 158–209 (LTDKQREAAAAAVAKGYYATPRGADLSDLATALGISKSAVSQRLSAVESKLA).

Involved in activating dmsEABCD gene expression related to dimethyl sulfoxide (DMSO) reductase. Required for anaerobic respiration on dimethyl sulfoxide (DMSO) and trimethylamine N-oxide (TMAO). This chain is Dimethyl sulfoxide reductase transcriptional activator (dmsR), found in Halobacterium salinarum (strain ATCC 700922 / JCM 11081 / NRC-1) (Halobacterium halobium).